The sequence spans 617 residues: ATP-dependent rRNA helicase SPB4 (617 aa).

A Q motif motif is present at residues 7–35; it reads WADLDYELQPWIKKAINVSGFDSMTPVQA. Residues 38 to 224 form the Helicase ATP-binding domain; it reads IPMFAKNKDV…KTGLRNPVKI (187 aa). An ATP-binding site is contributed by 51 to 58; sequence SVTGSGKT. The DEAD box signature appears at 172–175; the sequence is DEAD. One can recognise a Helicase C-terminal domain in the interval 252 to 406; the sequence is NLIHIMNNIR…ETDINKNKIS (155 aa).

Belongs to the DEAD box helicase family. DDX55/SPB4 subfamily. As to quaternary structure, component of pre-60S ribosomal complexes.

Its subcellular location is the nucleus. It is found in the nucleolus. It catalyses the reaction ATP + H2O = ADP + phosphate + H(+). ATP-binding RNA helicase involved in the biogenesis of 60S ribosomal subunits. Binds 90S pre-ribosomal particles and dissociates from pre-60S ribosomal particles after processing of 27SB pre-rRNA. Required for the normal formation of 18S rRNA through the processing of pre-rRNAs at sites A0, A1 and A2, and the normal formation of 25S and 5.8S rRNAs through the processing of pre-rRNAs at sites C1 and C2. This is ATP-dependent rRNA helicase SPB4 from Candida glabrata (strain ATCC 2001 / BCRC 20586 / JCM 3761 / NBRC 0622 / NRRL Y-65 / CBS 138) (Yeast).